Here is a 922-residue protein sequence, read N- to C-terminus: MSRFKVSKFRHMEARPSRREAWISDIRAVTTPTCGNHIKSSCSLIAFNSDRPGVLGVISLEGHEENKRHVTYLGCHSDLVTDLDFSPFDDFLLASGSADRTIKLWRLSGTGEALPSVPGVVLGPEELPVEVLQFHPTVDGVLVSTAGKTVKVWDVAKQQPLTELEAHKDLVQSAVWSRDGAIVGTACKDKQLRIFDPRARTQASQSTQAHENNRDIRLAWTGIQEHLVSTGFNQMREREAKLWDTRLFSSALASVTLDTSPGPLIPLLDPDSGLLVLAGKGENQLYCYEVTPQQPALSPVTQCILENVLRGAALVPRRALAVMSCEVLQVLQLSDTAIIPISHHVPRKAVEFHEDLFPDTAGSVPASDAHMWWAGDNQQVQKVSLNPARRPHPCFTSSLVPTMEPAPDMVQPAEMPRADTDLSEGFSSPSSLMSPSTPSSLGPSLSSTSGIGTSPSQRSLQSLLGPSSKFRHTQGSLLHRDSHITNLKGLNLTTPGESDGFCANRLRVAVPLLSSGGQVAVLELQKPGRLPDTALPTLQNGTAVMDLVWDPFDPHRLAVAGEDARIRLWRVPPGGLENVLTTPETVLTGHTEKIYSLRFHPLAADVLASSSYDLTVRIWDLQTGAERLKLQGHQDQIFSLAWSPDGKQLATVCKDGHVRVYEPRSSPLPLQEGPGPEGGRGARIVWVCDGGCLLVSGFDSRSERQLQLYIADALAQGPSALLGLDVAPSTLLPSYDPDTGLVLLTGKGDTRVFLYEVLPEAPFFLECNSFTSPDPHKGFVLLPKTECDIQDVEFARCLRLRQTSLEPVAFRLPRVRKEFFQDDVFPDTAVTWEPALSAKAWFEGANGQPRLLSLQPPGMTPVSQAPREVPARRAPSSAQYLEEKSDQQKKEELLNAMVAKLGNREDPLPQDSFEGVDEDEWD.

WD repeat units lie at residues 75-115, 124-163, 166-205, and 209-253; these read CHSD…EALP, PEEL…PLTE, AHKD…QASQ, and AHEN…SALA. The segment at 419–467 is disordered; sequence DTDLSEGFSSPSSLMSPSTPSSLGPSLSSTSGIGTSPSQRSLQSLLGPS. Positions 427–456 are enriched in low complexity; sequence SSPSSLMSPSTPSSLGPSLSSTSGIGTSPS. Residues S459 and S462 each carry the phosphoserine modification. K469 is covalently cross-linked (Glycyl lysine isopeptide (Lys-Gly) (interchain with G-Cter in ubiquitin)). 4 WD repeats span residues 539–581, 589–629, 632–671, and 725–765; these read QNGT…NVLT, GHTE…ERLK, GHQD…LPLQ, and DVAP…PFFL. Residues 858–922 form a disordered region; the sequence is GMTPVSQAPR…FEGVDEDEWD (65 aa). Positions 881 to 893 are enriched in basic and acidic residues; that stretch reads LEEKSDQQKKEEL. Phosphoserine is present on S912.

This sequence belongs to the WD repeat coronin family. Interacts with clathrin adapter AP1 complex. This interaction takes place at Golgi membranes and not AP1-positive endosomal membranes. Interacts (when ubiquitinated at Lys-469) with EPS15. In terms of processing, the membrane-associated form is phosphorylated on tyrosine residues. Post-translationally, ubiquitinated via 'Lys-33'-linked ubiquitin chains by the BCR(KLHL20) E3 ubiquitin ligase complex: 'Lys-33'-linked ubiquitination promotes interaction with EPS15 and facilitates actin polymerization at the trans-Golgi network, thereby facilitating post-Golgi trafficking. Deubiquitinated by ZRANB1/TRABID. In terms of tissue distribution, in the adult, widely expressed with highest levels in brain, thymus and kidney and low levels in skeletal and heart muscle. Not expressed in lung. In the eye, strongly expressed in the outer plexiform layer of the retina. In the intestine, expressed both in terminally differentiated epithelial cells and in crypt epithelium. In the embryo, strongest expression is seen in brain, thymus, intestine, apical epidermal layers of the skin and developing lens fibers of the eye.

Its subcellular location is the golgi apparatus membrane. The protein localises to the golgi apparatus. It localises to the trans-Golgi network. The protein resides in the cytoplasmic vesicle. It is found in the cytoplasm. Its subcellular location is the cytosol. In terms of biological role, F-actin regulator involved in anterograde Golgi to endosome transport: upon ubiquitination via 'Lys-33'-linked ubiquitin chains by the BCR(KLHL20) E3 ubiquitin ligase complex, interacts with EPS15 and localizes to the trans-Golgi network, where it promotes actin polymerization, thereby facilitating post-Golgi trafficking. May play a role in the maintenance of the Golgi apparatus morphology. In Mus musculus (Mouse), this protein is Coronin-7 (Coro7).